Reading from the N-terminus, the 112-residue chain is MVDDELAELRRRRMEQMQRQAMDQQGMEEEAARQQQIDAQVRAALMEILEPEARERLNTIKLTRPEFAKAVEQQLVMLAQSGRVRQRITDEQLKALLAQLTPSKKEFRITRK.

The segment at 14 to 35 (MEQMQRQAMDQQGMEEEAARQQ) is disordered.

It belongs to the PDCD5 family.

The chain is DNA-binding protein Memar_1972 from Methanoculleus marisnigri (strain ATCC 35101 / DSM 1498 / JR1).